The primary structure comprises 364 residues: Spermidine/putrescine import ATP-binding protein PotA (364 aa).

Residues 6–236 (IEIRQIYKSY…PANLHVAMFI (231 aa)) form the ABC transporter domain. 38-45 (GPSGCGKT) lines the ATP pocket.

This sequence belongs to the ABC transporter superfamily. Spermidine/putrescine importer (TC 3.A.1.11.1) family. As to quaternary structure, the complex is composed of two ATP-binding proteins (PotA), two transmembrane proteins (PotB and PotC) and a solute-binding protein (PotD).

The protein localises to the cell inner membrane. The enzyme catalyses ATP + H2O + polyamine-[polyamine-binding protein]Side 1 = ADP + phosphate + polyamineSide 2 + [polyamine-binding protein]Side 1.. Part of the ABC transporter complex PotABCD involved in spermidine/putrescine import. Responsible for energy coupling to the transport system. The sequence is that of Spermidine/putrescine import ATP-binding protein PotA from Legionella pneumophila (strain Paris).